Consider the following 810-residue polypeptide: Calpain-3 (810 aa).

Residues 9 to 27 (VAQQTAAGSVPSTTSTTTE) show a composition bias toward low complexity. The disordered stretch occupies residues 9–31 (VAQQTAAGSVPSTTSTTTEGTGG). In terms of domain architecture, Calpain catalytic spans 68–410 (LYEDPDFPPN…FTKLEICNLT (343 aa)). Active-site residues include Cys123, His327, and Asn351. A domain III region spans residues 411–579 (PDTLEADKLQ…KRSLSEEVEN (169 aa)). Positions 578–639 (ENMIEADRPS…SAKAREKSEE (62 aa)) are disordered. Positions 580 to 638 (MIEADRPSKKKKGKPIIFVSDRANSNKELTTDEDAGKDGEKTHVDEKKRSSAKAREKSE) are linker. Over residues 613–639 (DAGKDGEKTHVDEKKRSSAKAREKSEE) the composition is skewed to basic and acidic residues. 4 consecutive EF-hand domains span residues 638-672 (EEET…VVKK), 681-714 (FELE…DKIK), 711-746 (DKIK…AGFR), and 776-810 (VRLD…TMYA). The domain IV stretch occupies residues 639–809 (EETQFRNIFR…VLEWLQLTMY (171 aa)). Ala651, Asp654, Glu656, Glu661, Asp694, Asp696, Ser698, Lys700, Glu705, Asp724, Asp726, Ser728, Thr730, Glu735, Asp789, Asp791, Asp793, and Ile795 together coordinate Ca(2+).

The protein belongs to the peptidase C2 family. As to quaternary structure, homodimer; via EF-hand domain 4. Interacts with TTN/titin. Interacts with CMYA5; this interaction, which results in CMYA5 proteolysis, may protect CAPN3 from autolysis. Interacts with SIMC1. Interacts with UTP25; the interaction is required for CAPN3 translocation to the nucleolus. As to expression, skeletal muscle. Low levels in spleen, intestine and bone.

The protein localises to the cytoplasm. Its subcellular location is the nucleus. The protein resides in the nucleolus. It catalyses the reaction Broad endopeptidase activity.. Its activity is regulated as follows. Activated by micromolar concentrations of calcium and inhibited by calpastatin. Functionally, calcium-regulated non-lysosomal thiol-protease. Proteolytically cleaves CTBP1. Mediates, with UTP25, the proteasome-independent degradation of p53/TP53. The chain is Calpain-3 (CAPN3) from Gallus gallus (Chicken).